The primary structure comprises 544 residues: CRISPR-associated endodeoxyribonuclease Cas12f2 (544 aa).

Positions Met1–Val195 are recognition domain (REC). The interval His196–Val326 is wedge domain (WED). The interval Glu327 to Gly334 is linker. The ruvC-I stretch occupies residues Cys335–Gln485. Active-site residues include Asp339 and Glu430. Residues Thr486–Asn520 are target nucleic acid-binding (TNB). Cys487, Cys490, Cys507, and Cys512 together coordinate Zn(2+). Residues Ala521 to Thr541 form a ruvC-II region. The active site involves Asp522.

This sequence belongs to the CRISPR-associated endonuclease Cas12f family. As to quaternary structure, an asymmetric homodimer. Guide RNA is probably required for dimerization. It depends on Mg(2+) as a cofactor. Requires Zn(2+) as cofactor.

Functionally, CRISPR (clustered regularly interspaced short palindromic repeat), is an adaptive immune system that provides protection against mobile genetic elements (viruses, transposable elements and conjugative plasmids). CRISPR clusters contain sequences complementary to antecedent mobile elements and target invading nucleic acids. CRISPR clusters are transcribed and processed into CRISPR RNA (crRNA), which requires a trans-encoded small RNA (tracrRNA), but not this protein (in vitro). Recognizes a short motif in the CRISPR repeat sequences (the 5' PAM or protospacer adjacent motif, TTAT in this organism) to help distinguish self versus nonself, as targets within the CRISPR locus do not have PAMs. Upon expression in E.coli of this protein, a mini CRISPR array and the probable tracrRNA, has dsDNA endonuclease activity. DNA cleavage is centered around positions 21 base pairs 3' of PAM. The mini system does not protect E.coli against transformation by foreign plasmids. The protein is CRISPR-associated endodeoxyribonuclease Cas12f2 of Micrarchaeota archaeon (strain CG1_02_47_40).